Reading from the N-terminus, the 152-residue chain is Large ribosomal subunit protein bL17 (152 aa).

The segment at 121–140 (APSASQKTGKQDRAKRVKGS) is disordered.

This sequence belongs to the bacterial ribosomal protein bL17 family. In terms of assembly, part of the 50S ribosomal subunit. Contacts protein L32.

In Pelodictyon phaeoclathratiforme (strain DSM 5477 / BU-1), this protein is Large ribosomal subunit protein bL17.